The chain runs to 334 residues: Ribosomal RNA small subunit methyltransferase H (334 aa).

Residues 54 to 56 (GGH), Asp74, Phe100, Asp121, and Gln128 each bind S-adenosyl-L-methionine. The segment at 272 to 318 (RHSKGQYPEDENLPMPPKRPRYFSKPKRVGPSKAEISNNPRSRSAWL) is disordered. A compositionally biased stretch (basic residues) spans 289–301 (KRPRYFSKPKRVG).

The protein belongs to the methyltransferase superfamily. RsmH family.

The protein resides in the cytoplasm. The catalysed reaction is cytidine(1402) in 16S rRNA + S-adenosyl-L-methionine = N(4)-methylcytidine(1402) in 16S rRNA + S-adenosyl-L-homocysteine + H(+). In terms of biological role, specifically methylates the N4 position of cytidine in position 1402 (C1402) of 16S rRNA. This Psychrobacter arcticus (strain DSM 17307 / VKM B-2377 / 273-4) protein is Ribosomal RNA small subunit methyltransferase H.